Reading from the N-terminus, the 1216-residue chain is RAB11-binding protein RELCH (1216 aa).

A compositionally biased stretch (gly residues) spans 1–13 (MAAMAPGGGGSGS). Disordered stretches follow at residues 1–67 (MAAM…GSSA) and 133–179 (NPGN…NRAG). An N-acetylalanine modification is found at A2. S20 and S22 each carry phosphoserine. The span at 21-31 (DSDEDDDEVAA) shows a compositional bias: acidic residues. T32 carries the post-translational modification Phosphothreonine. Residues S54 and S56 each carry the phosphoserine modification. Over residues 142 to 154 (GTPPGMGAPGIPG) the composition is skewed to low complexity. Phosphoserine is present on residues S180 and S182. Position 183 is a phosphothreonine (T183). Residue S186 is modified to Phosphoserine. The stretch at 197-231 (NRETDERVAVLEFELRKAKETIQALRANLTKAAEH) forms a coiled coil. Positions 255–287 (EKRALNFLVNEFLLKNNYKLTSITFSDENDDQD) constitute a LisH domain. Residues 358-397 (LVQKLEDKISLLNNEKWSLMEQIRRLESEMDILKAEHFAT) adopt a coiled-coil conformation. Position 385 is a phosphoserine (S385). A disordered region spans residues 409–473 (VWSSQKDSED…ELPPSSVSNK (65 aa)). The span at 429 to 440 (DQEKTKDVHLEI) shows a compositional bias: basic and acidic residues. At S453 the chain carries Phosphoserine. The interval 497–779 (CRMSADSRLG…SSKAKLHGEV (283 aa)) is interaction with RAB11A and RAB11B. HEAT repeat units lie at residues 601 to 639 (LLPQ…RSSL) and 640 to 679 (VLSM…KYQQ). S792 bears the Phosphoserine mark. Residues 1004–1042 (VVPALITLSSDPEISVRIATIPAFGTIMETVIQRELLER) form an HEAT 3 repeat. The residue at position 1149 (S1149) is a Phosphoserine.

In terms of assembly, interacts with RAB11A (VIA-GTP form). Interacts with RAB11B. Interacts (via the third HEAT repeat) with OSBP (via C-terminus). Found in a complex composed of RELCH, OSBP1 and RAB11A.

The protein resides in the recycling endosome. The protein localises to the golgi apparatus. It localises to the trans-Golgi network. Its function is as follows. Regulates intracellular cholesterol distribution from recycling endosomes to the trans-Golgi network through interactions with RAB11 and OSBP. Functions in membrane tethering and promotes OSBP-mediated cholesterol transfer between RAB11-bound recycling endosomes and OSBP-bound Golgi-like membranes. This chain is RAB11-binding protein RELCH (Relch), found in Mus musculus (Mouse).